Consider the following 491-residue polypeptide: Anthranilate synthase component 1 (491 aa).

L-tryptophan contacts are provided by residues S49 and 271 to 273; that span reads PYL. 306 to 307 contacts chorismate; that stretch reads GT. E333 contributes to the Mg(2+) binding site. Chorismate-binding positions include Y421, R441, 455-457, and G457; that span reads GAG. A Mg(2+)-binding site is contributed by E470.

It belongs to the anthranilate synthase component I family. In terms of assembly, heterotetramer consisting of two non-identical subunits: a beta subunit (TrpG) and a large alpha subunit (TrpE). It depends on Mg(2+) as a cofactor.

The catalysed reaction is chorismate + L-glutamine = anthranilate + pyruvate + L-glutamate + H(+). It participates in amino-acid biosynthesis; L-tryptophan biosynthesis; L-tryptophan from chorismate: step 1/5. Feedback inhibited by tryptophan. Functionally, part of a heterotetrameric complex that catalyzes the two-step biosynthesis of anthranilate, an intermediate in the biosynthesis of L-tryptophan. In the first step, the glutamine-binding beta subunit (TrpG) of anthranilate synthase (AS) provides the glutamine amidotransferase activity which generates ammonia as a substrate that, along with chorismate, is used in the second step, catalyzed by the large alpha subunit of AS (TrpE) to produce anthranilate. In the absence of TrpG, TrpE can synthesize anthranilate directly from chorismate and high concentrations of ammonia. The polypeptide is Anthranilate synthase component 1 (trpE) (Neisseria meningitidis serogroup B (strain ATCC BAA-335 / MC58)).